A 109-amino-acid chain; its full sequence is Nucleoid-associated protein Spro_1136 (109 aa).

Disordered stretches follow at residues 1 to 21 (MFGK…QEKM) and 90 to 109 (EKMA…KMPF). Over residues 11–21 (MKQAQQMQEKM) the composition is skewed to low complexity.

Belongs to the YbaB/EbfC family. As to quaternary structure, homodimer.

Its subcellular location is the cytoplasm. The protein localises to the nucleoid. Its function is as follows. Binds to DNA and alters its conformation. May be involved in regulation of gene expression, nucleoid organization and DNA protection. This Serratia proteamaculans (strain 568) protein is Nucleoid-associated protein Spro_1136.